The following is a 261-amino-acid chain: DNA repair protein RecO (261 aa).

It belongs to the RecO family.

Its function is as follows. Involved in DNA repair and RecF pathway recombination. In Mycobacteroides abscessus (strain ATCC 19977 / DSM 44196 / CCUG 20993 / CIP 104536 / JCM 13569 / NCTC 13031 / TMC 1543 / L948) (Mycobacterium abscessus), this protein is DNA repair protein RecO.